Reading from the N-terminus, the 420-residue chain is UDP-N-acetylglucosamine 1-carboxyvinyltransferase (420 aa).

23-24 (KN) provides a ligand contact to phosphoenolpyruvate. Position 92 (Arg-92) interacts with UDP-N-acetyl-alpha-D-glucosamine. The active-site Proton donor is Cys-116. Cys-116 is subject to 2-(S-cysteinyl)pyruvic acid O-phosphothioketal. UDP-N-acetyl-alpha-D-glucosamine contacts are provided by residues 121–125 (RPVDL), 161–164 (KVSV), Asp-306, and Ile-328.

This sequence belongs to the EPSP synthase family. MurA subfamily.

The protein resides in the cytoplasm. It catalyses the reaction phosphoenolpyruvate + UDP-N-acetyl-alpha-D-glucosamine = UDP-N-acetyl-3-O-(1-carboxyvinyl)-alpha-D-glucosamine + phosphate. It functions in the pathway cell wall biogenesis; peptidoglycan biosynthesis. Cell wall formation. Adds enolpyruvyl to UDP-N-acetylglucosamine. This Photobacterium profundum (strain SS9) protein is UDP-N-acetylglucosamine 1-carboxyvinyltransferase.